Reading from the N-terminus, the 71-residue chain is Small ribosomal subunit protein bS21 (71 aa).

The protein belongs to the bacterial ribosomal protein bS21 family.

The protein is Small ribosomal subunit protein bS21 of Cellvibrio japonicus (strain Ueda107) (Pseudomonas fluorescens subsp. cellulosa).